Consider the following 168-residue polypeptide: Large ribosomal subunit protein uL29c (168 aa).

Positions 1 to 20 (MLAIHSLSSTPCSSGLTSPP) are disordered. The N-terminal 58 residues, 1–58 (MLAIHSLSSTPCSSGLTSPPKSTLLTKSSFHGLRLPSVNLSSSLRLRVQTPPSSVVVM), are a transit peptide targeting the chloroplast.

As to quaternary structure, component of the chloroplast large ribosomal subunit (LSU). Mature 70S chloroplast ribosomes of higher plants consist of a small (30S) and a large (50S) subunit. The 30S small subunit contains 1 molecule of ribosomal RNA (16S rRNA) and 24 different proteins. The 50S large subunit contains 3 rRNA molecules (23S, 5S and 4.5S rRNA) and 33 different proteins.

Its subcellular location is the plastid. The protein localises to the chloroplast. Its function is as follows. Component of the chloroplast ribosome (chloro-ribosome), a dedicated translation machinery responsible for the synthesis of chloroplast genome-encoded proteins, including proteins of the transcription and translation machinery and components of the photosynthetic apparatus. This is Large ribosomal subunit protein uL29c (RPL29) from Spinacia oleracea (Spinach).